Consider the following 392-residue polypeptide: MAGKSGEEKMKAMEAEMALFEQEVLGAPVALPPVDPVPLPIPAVPVIRAIIATNTYSQVQQSLEARAAAAASVVGPMIVPPVPFVGPAIPPPRPPVMRPSFIPHALQRPAEPHGAMPRPSFIPHVLQQRAVGPRHPGMPPPQPLMAHHMHGPPPPLMRHIPPPPLGMRAGPPPAPVGPLPPPPRPVVPSAPKMNPTVIQAAPTVYTAPPVRKPEEEIVEPPILPDEKETLSFEEAVIGPSMPEMEPVQPEVVLEPVQEDKKKTKPEKLKRCIRTAAGTSWEDQSLLEWESDDFRIFCGDLGNEVNDDILARAFSRYPSFLRAKVIRDKRTGKTKGYGFVSFKDPNDYVRAMREMNGKYVGSRPIKLRKSQWKDRNMDVVRKKQREKKKLGLR.

An RRM domain is found at 293 to 371 (FRIFCGDLGN…RPIKLRKSQW (79 aa)). Residues 372 to 392 (KDRNMDVVRKKQREKKKLGLR) are disordered. Residues 381–392 (KKQREKKKLGLR) are compositionally biased toward basic residues.

Belongs to the RRM RBM42 family.

The protein resides in the nucleus. The protein localises to the cytoplasm. Functionally, may bind RNA. This Xenopus tropicalis (Western clawed frog) protein is RNA-binding protein 42 (rbm42).